Here is a 190-residue protein sequence, read N- to C-terminus: MFTNGASVPLSGSKDMENQQHQVLEQELWQGYKDRGFVVTKFSDLVDSVVRWSRSGSLWPMTFGLACCAVEMMHTAASRYDLDRYGVMFRASPRQADVMIVAGTLTNKMAPALRRVYDQMAEPKYVISMGSCANGGGYYHYSYSVVRGCDRIVPVDIYVPGCPPTAEALLYGILCLQQKIIRGNPGVRGA.

The [4Fe-4S] cluster site is built by cysteine 67, cysteine 68, cysteine 132, and cysteine 162.

The protein belongs to the complex I 20 kDa subunit family. NDH-1 is composed of 14 different subunits. Subunits NuoB, C, D, E, F, and G constitute the peripheral sector of the complex. [4Fe-4S] cluster is required as a cofactor.

Its subcellular location is the cell inner membrane. It catalyses the reaction a quinone + NADH + 5 H(+)(in) = a quinol + NAD(+) + 4 H(+)(out). Functionally, NDH-1 shuttles electrons from NADH, via FMN and iron-sulfur (Fe-S) centers, to quinones in the respiratory chain. The immediate electron acceptor for the enzyme in this species is believed to be ubiquinone. Couples the redox reaction to proton translocation (for every two electrons transferred, four hydrogen ions are translocated across the cytoplasmic membrane), and thus conserves the redox energy in a proton gradient. The sequence is that of NADH-quinone oxidoreductase subunit B from Anaplasma marginale (strain Florida).